Reading from the N-terminus, the 103-residue chain is Hexon-interlacing protein (103 aa).

Residues 72-99 adopt a coiled-coil conformation; the sequence is LDELKIQVAAMQNSVTAIQREVNDLKQR.

It belongs to the adenoviridae hexon-interlacing protein family. As to quaternary structure, homotrimer. Interacts with hexon protein; this interaction tethers the hexons together. Self-interacts with adjacent proteins. Interacts with kinesin light chain KLC1; this interaction leads to capsid disruption at the nuclear pore complex during virus entry into host cell.

Its subcellular location is the virion. It is found in the host nucleus. Functionally, structural component of the virion that acts as a cement protein on the capsid exterior and forms triskelion structures consisting of three molecules that stabilize three hexon trimers at the center of each icosahedral facet and fixes the peripentonal hexons. Dispensable for assembly. During virus entry, recruits the anterograde motor kinesin-1 to the capsid docked at the nuclear pore complex thereby subjecting the docked capsid to a pulling force. The resulting tension leads to capsid disruption, dispersion of capsid fragments toward cell periphery and eventually viral DNA entry into the host nucleus. The chain is Hexon-interlacing protein from Canis lupus familiaris (Dog).